A 213-amino-acid polypeptide reads, in one-letter code: Protein-L-isoaspartate O-methyltransferase 1 (213 aa).

Residue Ser-64 is part of the active site.

It belongs to the methyltransferase superfamily. L-isoaspartyl/D-aspartyl protein methyltransferase family.

The protein localises to the cytoplasm. It catalyses the reaction [protein]-L-isoaspartate + S-adenosyl-L-methionine = [protein]-L-isoaspartate alpha-methyl ester + S-adenosyl-L-homocysteine. Its function is as follows. Catalyzes the methyl esterification of L-isoaspartyl residues in peptides and proteins that result from spontaneous decomposition of normal L-aspartyl and L-asparaginyl residues. It plays a role in the repair and/or degradation of damaged proteins. In Nitrosococcus oceani (strain ATCC 19707 / BCRC 17464 / JCM 30415 / NCIMB 11848 / C-107), this protein is Protein-L-isoaspartate O-methyltransferase 1.